The following is a 281-amino-acid chain: Glutamate racemase (281 aa).

Substrate-binding positions include 10-11 and 42-43; these read DS and YG. Cys74 serves as the catalytic Proton donor/acceptor. 75-76 serves as a coordination point for substrate; the sequence is NT. The active-site Proton donor/acceptor is the Cys190. Residue 191–192 coordinates substrate; the sequence is TH.

The protein belongs to the aspartate/glutamate racemases family.

It catalyses the reaction L-glutamate = D-glutamate. It functions in the pathway cell wall biogenesis; peptidoglycan biosynthesis. Its function is as follows. Provides the (R)-glutamate required for cell wall biosynthesis. The chain is Glutamate racemase from Oenococcus oeni (strain ATCC BAA-331 / PSU-1).